A 398-amino-acid chain; its full sequence is Acetate kinase 2 (398 aa).

A Mg(2+)-binding site is contributed by N7. K14 is a binding site for ATP. R91 is a binding site for substrate. The Proton donor/acceptor role is filled by D148. ATP is bound by residues H208–G212, D283–R285, and G331–N335. Residue E384 participates in Mg(2+) binding.

It belongs to the acetokinase family. In terms of assembly, homodimer. Mg(2+) is required as a cofactor. Requires Mn(2+) as cofactor.

The protein resides in the cytoplasm. It carries out the reaction acetate + ATP = acetyl phosphate + ADP. It participates in metabolic intermediate biosynthesis; acetyl-CoA biosynthesis; acetyl-CoA from acetate: step 1/2. Its function is as follows. Catalyzes the formation of acetyl phosphate from acetate and ATP. Can also catalyze the reverse reaction. The polypeptide is Acetate kinase 2 (Clostridium perfringens (strain 13 / Type A)).